Here is an 884-residue protein sequence, read N- to C-terminus: uncharacterized protein (884 aa).

This is an uncharacterized protein from Mycobacterium tuberculosis (strain ATCC 25618 / H37Rv).